A 267-amino-acid chain; its full sequence is Tryptophan synthase alpha chain (267 aa).

Catalysis depends on proton acceptor residues E49 and D60.

The protein belongs to the TrpA family. Tetramer of two alpha and two beta chains.

The catalysed reaction is (1S,2R)-1-C-(indol-3-yl)glycerol 3-phosphate + L-serine = D-glyceraldehyde 3-phosphate + L-tryptophan + H2O. The protein operates within amino-acid biosynthesis; L-tryptophan biosynthesis; L-tryptophan from chorismate: step 5/5. Its function is as follows. The alpha subunit is responsible for the aldol cleavage of indoleglycerol phosphate to indole and glyceraldehyde 3-phosphate. The polypeptide is Tryptophan synthase alpha chain (Geobacter sp. (strain M21)).